The sequence spans 488 residues: ATP synthase subunit beta (488 aa).

164 to 171 (GGAGVGKT) provides a ligand contact to ATP.

It belongs to the ATPase alpha/beta chains family. As to quaternary structure, F-type ATPases have 2 components, CF(1) - the catalytic core - and CF(0) - the membrane proton channel. CF(1) has five subunits: alpha(3), beta(3), gamma(1), delta(1), epsilon(1). CF(0) has four main subunits: a(1), b(1), b'(1) and c(9-12).

It is found in the cellular thylakoid membrane. The enzyme catalyses ATP + H2O + 4 H(+)(in) = ADP + phosphate + 5 H(+)(out). Functionally, produces ATP from ADP in the presence of a proton gradient across the membrane. The catalytic sites are hosted primarily by the beta subunits. In Prochlorococcus marinus (strain MIT 9313), this protein is ATP synthase subunit beta.